The chain runs to 222 residues: Peroxisomal membrane protein 11-4 (222 aa).

The Cytoplasmic segment spans residues 1–81; the sequence is MSAGDTLDKL…LNGLRRAPGE (81 aa). The helical transmembrane segment at 82-102 threads the bilayer; it reads FGALAVLANAGEMVYFFFDHF. The Lumenal portion of the chain corresponds to 103 to 196; that stretch reads TWLSRVGVLD…IGIADIEPNP (94 aa). The helical transmembrane segment at 197 to 217 threads the bilayer; sequence FCNHAVTLGISGLVSAWAGWY. The Cytoplasmic portion of the chain corresponds to 218–222; sequence RNWPS.

Belongs to the peroxin-11 family. As to expression, expressed in seedlings, shoots, leaf sheaths and flag leaf.

It localises to the peroxisome membrane. Involved in peroxisomal proliferation. The chain is Peroxisomal membrane protein 11-4 (PEX11-4) from Oryza sativa subsp. indica (Rice).